A 485-amino-acid polypeptide reads, in one-letter code: UDP-glycosyltransferase 71B2 (485 aa).

Residues Ser-287, 354–356 (APQ), 371–379 (HCGWNSTLE), and 393–396 (YAEQ) each bind UDP-alpha-D-glucose.

This sequence belongs to the UDP-glycosyltransferase family.

In terms of biological role, glucosyltransferase that glucosylates the cell wall inhibitor hypostatin in vivo to form a bioactive glucoside. This Arabidopsis thaliana (Mouse-ear cress) protein is UDP-glycosyltransferase 71B2 (UGT71B2).